A 374-amino-acid polypeptide reads, in one-letter code: Serpin B8 (374 aa).

This sequence belongs to the serpin family. Ov-serpin subfamily.

The protein resides in the cytoplasm. Has an important role in epithelial desmosome-mediated cell-cell adhesion. This Bos taurus (Bovine) protein is Serpin B8 (SERPINB8).